Reading from the N-terminus, the 87-residue chain is Putative regulatory protein CHY_1489 (87 aa).

This sequence belongs to the RemA family.

The sequence is that of Putative regulatory protein CHY_1489 from Carboxydothermus hydrogenoformans (strain ATCC BAA-161 / DSM 6008 / Z-2901).